The sequence spans 273 residues: MAMQFYASPEQIMRDRSELARKGIARGRSAVVLSYAGGVLFVAENLSSALHKVGEIYDRIGFAAVGRYNEFENLRRAGVRMADLNGLSYDRRDVTGRALANAFAQTLGAIFTEQSKPFEVEICVAQVGATTADDELYRLTYDGSVNDEPGRMAMGGQAEAITGVLKSNHRPDMSLGDAVKVAVQALGSVGGEGGAARTIAADQLEVAVLDRGRVGRTFRRVTGAALTVLLDDGAAGQPPSSSDTDTSAAEARKPTASAGSADLEGPEPERPDS.

The disordered stretch occupies residues 231-273 (DDGAAGQPPSSSDTDTSAAEARKPTASAGSADLEGPEPERPDS). Over residues 238 to 249 (PPSSSDTDTSAA) the composition is skewed to low complexity.

The protein belongs to the peptidase T1A family. As to quaternary structure, the 20S proteasome core is composed of 14 alpha and 14 beta subunits that assemble into four stacked heptameric rings, resulting in a barrel-shaped structure. The two inner rings, each composed of seven catalytic beta subunits, are sandwiched by two outer rings, each composed of seven alpha subunits. The catalytic chamber with the active sites is on the inside of the barrel. Has a gated structure, the ends of the cylinder being occluded by the N-termini of the alpha-subunits. Is capped by the proteasome-associated ATPase, ARC.

The protein resides in the cytoplasm. It functions in the pathway protein degradation; proteasomal Pup-dependent pathway. The formation of the proteasomal ATPase ARC-20S proteasome complex, likely via the docking of the C-termini of ARC into the intersubunit pockets in the alpha-rings, may trigger opening of the gate for substrate entry. Interconversion between the open-gate and close-gate conformations leads to a dynamic regulation of the 20S proteasome proteolysis activity. In terms of biological role, component of the proteasome core, a large protease complex with broad specificity involved in protein degradation. This chain is Proteasome subunit alpha, found in Salinispora arenicola (strain CNS-205).